Consider the following 233-residue polypeptide: Biosynthetic peptidoglycan transglycosylase (233 aa).

The chain crosses the membrane as a helical span at residues 4 to 24; sequence LAYLAGCLIVGVVAMQVYFFL.

Belongs to the glycosyltransferase 51 family.

The protein localises to the cell inner membrane. It carries out the reaction [GlcNAc-(1-&gt;4)-Mur2Ac(oyl-L-Ala-gamma-D-Glu-L-Lys-D-Ala-D-Ala)](n)-di-trans,octa-cis-undecaprenyl diphosphate + beta-D-GlcNAc-(1-&gt;4)-Mur2Ac(oyl-L-Ala-gamma-D-Glu-L-Lys-D-Ala-D-Ala)-di-trans,octa-cis-undecaprenyl diphosphate = [GlcNAc-(1-&gt;4)-Mur2Ac(oyl-L-Ala-gamma-D-Glu-L-Lys-D-Ala-D-Ala)](n+1)-di-trans,octa-cis-undecaprenyl diphosphate + di-trans,octa-cis-undecaprenyl diphosphate + H(+). Its pathway is cell wall biogenesis; peptidoglycan biosynthesis. Peptidoglycan polymerase that catalyzes glycan chain elongation from lipid-linked precursors. The sequence is that of Biosynthetic peptidoglycan transglycosylase from Cupriavidus metallidurans (strain ATCC 43123 / DSM 2839 / NBRC 102507 / CH34) (Ralstonia metallidurans).